The sequence spans 124 residues: Putative iron-sulfur cluster insertion protein ErpA (124 aa).

C52, C116, and C118 together coordinate iron-sulfur cluster.

It belongs to the HesB/IscA family. Homodimer. The cofactor is iron-sulfur cluster.

Required for insertion of 4Fe-4S clusters. The sequence is that of Putative iron-sulfur cluster insertion protein ErpA from Ralstonia nicotianae (strain ATCC BAA-1114 / GMI1000) (Ralstonia solanacearum).